A 674-amino-acid chain; its full sequence is NADH-ubiquinone oxidoreductase chain 5 (674 aa).

Transmembrane regions (helical) follow at residues 27-47 (GAHI…IVAF), 81-101 (LTVS…IFSV), 113-133 (FFAY…GDNY), 135-155 (IMFV…NFWF), 173-193 (VGDM…GNLD), 200-220 (IAPF…LLAA), 242-262 (TPVS…YLLL), 275-295 (LIVI…TGLL), 301-323 (RVIA…LSQY), 325-345 (VALF…LAAG), 363-383 (LIGF…SLIA), 410-430 (VAYW…LRLI), 453-473 (TIVM…GYVA), 514-534 (AIGT…LPVF), 556-576 (YVDV…GYVI), 616-636 (ALYL…PVLL), and 639-659 (ALIN…IPYI).

Belongs to the complex I subunit 5 family.

Its subcellular location is the mitochondrion inner membrane. The enzyme catalyses a ubiquinone + NADH + 5 H(+)(in) = a ubiquinol + NAD(+) + 4 H(+)(out). In terms of biological role, core subunit of the mitochondrial membrane respiratory chain NADH dehydrogenase (Complex I) that is believed to belong to the minimal assembly required for catalysis. Complex I functions in the transfer of electrons from NADH to the respiratory chain. The immediate electron acceptor for the enzyme is believed to be ubiquinone. This chain is NADH-ubiquinone oxidoreductase chain 5 (ND5), found in Mycosarcoma maydis (Corn smut fungus).